We begin with the raw amino-acid sequence, 729 residues long: Carbon monoxide dehydrogenase/acetyl-CoA synthase subunit alpha (729 aa).

Positions 506, 509, 518, and 528 each coordinate [4Fe-4S] cluster. Position 509 (C509) interacts with Ni(2+). Positions 595, 596, and 597 each coordinate Ni(2+).

As to quaternary structure, tetramer of two alpha and two beta chains. It depends on Ni cation as a cofactor. [4Fe-4S] cluster is required as a cofactor.

The catalysed reaction is Co(I)-[corrinoid Fe-S protein] + acetyl-CoA + H(+) = methyl-Co(III)-[corrinoid Fe-S protein] + CO + CoA. Functionally, the beta subunit generates CO from CO(2), while the alpha subunit (this protein) combines the CO with CoA and a methyl group to form acetyl-CoA. The methyl group, which is incorporated into acetyl-CoA, is transferred to the alpha subunit by a corrinoid iron-sulfur protein. This Moorella thermoacetica (Clostridium thermoaceticum) protein is Carbon monoxide dehydrogenase/acetyl-CoA synthase subunit alpha.